The chain runs to 65 residues: Large ribosomal subunit protein bL35 (65 aa).

Over residues 1 to 16 (MPKMKTHRASAKRFKK) the composition is skewed to basic residues. The interval 1–24 (MPKMKTHRASAKRFKKTANGGLKS) is disordered.

This sequence belongs to the bacterial ribosomal protein bL35 family.

The protein is Large ribosomal subunit protein bL35 of Leuconostoc mesenteroides subsp. mesenteroides (strain ATCC 8293 / DSM 20343 / BCRC 11652 / CCM 1803 / JCM 6124 / NCDO 523 / NBRC 100496 / NCIMB 8023 / NCTC 12954 / NRRL B-1118 / 37Y).